We begin with the raw amino-acid sequence, 276 residues long: Pantothenate synthetase (276 aa).

27 to 34 (MGALHKGH) serves as a coordination point for ATP. His-34 (proton donor) is an active-site residue. Gln-58 provides a ligand contact to (R)-pantoate. Beta-alanine is bound at residue Gln-58. 147 to 150 (GKKD) contributes to the ATP binding site. Gln-153 is a (R)-pantoate binding site. Residues Val-176 and 184-187 (LSSR) each bind ATP.

It belongs to the pantothenate synthetase family. Homodimer.

It localises to the cytoplasm. The enzyme catalyses (R)-pantoate + beta-alanine + ATP = (R)-pantothenate + AMP + diphosphate + H(+). Its pathway is cofactor biosynthesis; (R)-pantothenate biosynthesis; (R)-pantothenate from (R)-pantoate and beta-alanine: step 1/1. Functionally, catalyzes the condensation of pantoate with beta-alanine in an ATP-dependent reaction via a pantoyl-adenylate intermediate. In Helicobacter pylori (strain Shi470), this protein is Pantothenate synthetase.